The following is a 389-amino-acid chain: ATP phosphoribosyltransferase regulatory subunit (389 aa).

This sequence belongs to the class-II aminoacyl-tRNA synthetase family. HisZ subfamily. In terms of assembly, heteromultimer composed of HisG and HisZ subunits.

It localises to the cytoplasm. It participates in amino-acid biosynthesis; L-histidine biosynthesis; L-histidine from 5-phospho-alpha-D-ribose 1-diphosphate: step 1/9. In terms of biological role, required for the first step of histidine biosynthesis. May allow the feedback regulation of ATP phosphoribosyltransferase activity by histidine. This Moorella thermoacetica (strain ATCC 39073 / JCM 9320) protein is ATP phosphoribosyltransferase regulatory subunit.